Reading from the N-terminus, the 370-residue chain is Sensor histidine kinase DesK (370 aa).

At 1–10 (MIKNHFTFQK) the chain is on the extracellular side. The chain crosses the membrane as a helical span at residues 11 to 31 (LNGITPYIWTIFFILPFYFIW). The Cytoplasmic segment spans residues 32–36 (KSSST). A helical transmembrane segment spans residues 37–57 (FVIIVGIILTLLFFSVYRFAF). At 58–70 (VSKGWTIYLWGFL) the chain is on the extracellular side. The chain crosses the membrane as a helical span at residues 71-91 (LIGISTASITLFSYIYFAFFI). At 92 to 103 (AYFIGNIKERVP) the chain is on the cytoplasmic side. A helical transmembrane segment spans residues 104–124 (FHILYYVHLISAAVAANFSLV). Residues 125–128 (LKKE) lie on the Extracellular side of the membrane. Residues 129–149 (FFLTQIPFVVITLISAILLPF) form a helical membrane-spanning segment. The Cytoplasmic portion of the chain corresponds to 150–370 (SIKSRKERER…LTMAIPNNSK (221 aa)). The Histidine kinase domain maps to 186 to 369 (DLHDTLGQKL…KLTMAIPNNS (184 aa)). At histidine 188 the chain carries Phosphohistidine; by autocatalysis.

The protein resides in the cell membrane. The enzyme catalyses ATP + protein L-histidine = ADP + protein N-phospho-L-histidine.. In terms of biological role, member of the two-component regulatory system DesR/DesK, responsible for cold induction of the des gene coding for the Delta5 acyl-lipid desaturase. Acts as a sensor of the membrane fluidity. Probably activates DesR by phosphorylation. In Bacillus subtilis (strain 168), this protein is Sensor histidine kinase DesK (desK).